We begin with the raw amino-acid sequence, 928 residues long: DNA ligase 4 (928 aa).

ATP-binding residues include glutamate 302, lysine 304, arginine 309, glutamate 362, phenylalanine 409, glutamate 469, lysine 474, lysine 492, and lysine 494. The active-site N6-AMP-lysine intermediate is the lysine 304. Glutamate 362 contributes to the Mg(2+) binding site. Residue glutamate 469 participates in Mg(2+) binding. BRCT domains follow at residues 673 to 769 (VESD…PYFI) and 821 to 927 (PWIY…DYKF).

This sequence belongs to the ATP-dependent DNA ligase family. The cofactor is Mg(2+).

It localises to the nucleus. The catalysed reaction is ATP + (deoxyribonucleotide)n-3'-hydroxyl + 5'-phospho-(deoxyribonucleotide)m = (deoxyribonucleotide)n+m + AMP + diphosphate.. Its function is as follows. DNA ligase involved in DNA non-homologous end joining (NHEJ); required for double-strand break (DSB) repair. Not required for the repair of DSBs induced by ionizing radiation or UV light. Has an important role in morphogenesis, positively affecting the capacity to form hyphae. This is DNA ligase 4 (LIG4) from Candida albicans (strain SC5314 / ATCC MYA-2876) (Yeast).